The primary structure comprises 1262 residues: Unconventional myosin-VI (1262 aa).

The 52-residue stretch at E2–E53 folds into the Myosin N-terminal SH3-like domain. The region spanning K57–K771 is the Myosin motor domain. An ATP-binding site is contributed by G151–T158. Position 267 is a phosphoserine (S267). The responsible for slow ATPase activity stretch occupies residues Y273 to F317. T405 is subject to Phosphothreonine. S604 is subject to Phosphoserine. Actin-binding stretches follow at residues L651 to L673 and F665 to N672. The tract at residues K782–I810 is required for binding calmodulin. An IQ domain is found at A814–K834. The three-helix bundle stretch occupies residues P835–K916. Residues K864–E984 are a coiled coil. The interval K917–E984 is SAH. The tract at residues M933–R955 is disordered. S1025 carries the post-translational modification Phosphoserine. Residues L1034–A1253 are interaction with TAX1BP1 and CALCOCO2/NDP52. An interaction with OPTN region spans residues R1084–L1086. S1123 is subject to Phosphoserine. Residues Q1125 to A1253 are interaction with TOM1.

Belongs to the TRAFAC class myosin-kinesin ATPase superfamily. Myosin family. As to quaternary structure, homodimer; dimerization seems to implicate the unfolding of the three-helix bundle region creating an additional calmodulin binding site, and cargo binding. Able to function as a monomer under specific conditions in vitro. Forms a complex with CFTR and DAB2 in the apical membrane of epithelial cells. Component of the DISP/DOCK7-induced septin displacement complex, at least composed of DOCK7, LRCH3 and MYO6. Binding to calmodulin through a unique insert, not found in other myosins, located in the neck region between the motor domain and the IQ domain appears to contribute to the directionality reversal. This interaction occurs only if the C-terminal lobe of calmodulin is occupied by calcium. Interaction with F-actin/ACTN1 occurs only at the apical brush border domain of the proximal tubule cells. Interacts with DAB2. In vitro, the C-terminal globular tail binds a C-terminal region of DAB2. Interacts with CFTR. Interacts with CABP5. Interacts (via residues 1128-1256) with TOM1 (via residues 392-463). Interacts (via residues 1060-1285) with OPTN. Interacts (via residues 1060-1285) with TAX1BP1 and CALCOCO2/NDP52. Interacts with TOM1L2. Interacts with CLIC5; may work together in a complex which also includes RDX and MYO6 to stabilize linkages between the plasma membrane and subjacent actin cytoskeleton at the base of stereocilia. Phosphorylation in the motor domain, induced by EGF, results in translocation of MYO6 from the cell surface to membrane ruffles and affects F-actin dynamics. Phosphorylated in vitro by p21-activated kinase (PAK). In terms of tissue distribution, within the cochlea, expressed specifically within the sensory hair cells (at protein level). Expressed in the inner and outer plexiform layer of the retina (at protein level). Widely expressed. Expressed in the brain, kidney, liver, and testis.

It is found in the golgi apparatus. The protein resides in the trans-Golgi network membrane. Its subcellular location is the nucleus. The protein localises to the cytoplasm. It localises to the perinuclear region. It is found in the membrane. The protein resides in the clathrin-coated pit. Its subcellular location is the cytoplasmic vesicle. The protein localises to the clathrin-coated vesicle. It localises to the cell projection. It is found in the filopodium. The protein resides in the ruffle membrane. Its subcellular location is the microvillus. The protein localises to the cytosol. In terms of biological role, myosins are actin-based motor molecules with ATPase activity. Unconventional myosins serve in intracellular movements. Myosin 6 is a reverse-direction motor protein that moves towards the minus-end of actin filaments. Has slow rate of actin-activated ADP release due to weak ATP binding. Functions in a variety of intracellular processes such as vesicular membrane trafficking and cell migration. Required for the structural integrity of the Golgi apparatus via the p53-dependent pro-survival pathway. Appears to be involved in a very early step of clathrin-mediated endocytosis in polarized epithelial cells. Together with TOM1, mediates delivery of endocytic cargo to autophagosomes thereby promoting autophagosome maturation and driving fusion with lysosomes. Links TOM1 with autophagy receptors, such as TAX1BP1; CALCOCO2/NDP52 and OPTN. May act as a regulator of F-actin dynamics. As part of the DISP complex, may regulate the association of septins with actin and thereby regulate the actin cytoskeleton. May play a role in transporting DAB2 from the plasma membrane to specific cellular targets. May play a role in the extension and network organization of neurites. Required for structural integrity of inner ear hair cells. Required for the correct localization of CLIC5 and RDX at the stereocilium base. Modulates RNA polymerase II-dependent transcription. The protein is Unconventional myosin-VI (Myo6) of Mus musculus (Mouse).